Consider the following 331-residue polypeptide: MNPIPSWPGRGRVTLVLLAVVPVALAYPWQSTRDYVLLGVAAAVVIGLFGFWRGLYFTTIARRGLAILRRRRRIAEPATCTRTTVLVWVGPPASDTNVLPLTLIARYLDRYGIRADTIRITSRVTASGDCRTWVGLTVVADDNLAALQARSARIPLQETAQVAARRLADHLREIGWEAGTAAPDEIPALVAADSRETWRGMRHTDSDYVAAYRVSADAELPDTLPAIRSRPAQETWIALEIAYAAGSSTRYTVAAACALRTDWRPGGTAPVAGLLPQHGNHVPALTALDPRSTRRLDGHTDAPADLLTRLHWPTPTAGAHRAPLTNAVSRT.

Transmembrane regions (helical) follow at residues 11–31 (GRVTLVLLAVVPVALAYPWQS) and 37–57 (LLGVAAAVVIGLFGFWRGLYF).

The protein belongs to the EccE family. In terms of assembly, part of the ESX-3 / type VII secretion system (T7SS), which is composed of cytosolic and membrane components. The ESX-3 membrane complex is composed of EccB3, EccC3, EccD3 and EccE3.

Its subcellular location is the cell inner membrane. Functionally, part of the ESX-3 specialized secretion system, which is important for iron and zinc uptake or homeostasis. The polypeptide is ESX-3 secretion system protein EccE3 (Mycobacterium tuberculosis (strain CDC 1551 / Oshkosh)).